A 438-amino-acid polypeptide reads, in one-letter code: Polycomb protein eed-B (438 aa).

A disordered region spans residues 1–70 (MSEASGRAAG…GRKGWGKGKW (70 aa)). Residues 40–57 (SIESGTNTERPDTPTNAA) are compositionally biased toward polar residues. WD repeat units follow at residues 88 to 131 (DHNQ…DIRL), 139 to 182 (DADE…CIKH), 185 to 225 (GHGN…LVAI), 231 to 270 (GHRDEVLSADYDLLGEKIMSCGMDHSLKLWRINSLRMKTA), 301 to 338 (IHRNYVDCVRWLGDLILSKSCENAIVCWKPGKMEDDIE), 356 to 396 (SQCD…PHKA), and 405 to 438 (KCASAIRQTSFSRDSSVLIAVCDDSTIWRWDRLR).

This sequence belongs to the WD repeat ESC family. As to quaternary structure, component of the prc2/eed-ezh2 complex. Can interact with ezh2, hdac1 and taf9. Interacts with yy1.

The protein localises to the nucleus. Polycomb group (PcG) protein. Component of the prc2/eed-ezh2 complex, which methylates 'Lys-9' and 'Lys-27' of histone H3, leading to transcriptional repression of the affected target gene. May play a role in neural induction. The polypeptide is Polycomb protein eed-B (eed-b) (Xenopus laevis (African clawed frog)).